Consider the following 380-residue polypeptide: Two-component response regulator ORR28 (380 aa).

Residues 13–130 (SAMVIDEDKC…TIQNLWQHLD (118 aa)) enclose the Response regulatory domain. At aspartate 65 the chain carries 4-aspartylphosphate. The segment at residues 169 to 223 (RKYYLMWTPHLQKKFLHALEILGEGQISLMIMDVDNIDRKQISTHLQKHRLQLKK) is a DNA-binding region (myb-like GARP). Positions 225 to 245 (LSKASFTKGSNEDTSNPSAKN) are disordered. Residues 228–245 (ASFTKGSNEDTSNPSAKN) are compositionally biased toward polar residues.

The protein belongs to the ARR family. Type-B subfamily. In terms of processing, two-component system major event consists of a His-to-Asp phosphorelay between a sensor histidine kinase (HK) and a response regulator (RR). In plants, the His-to-Asp phosphorelay involves an additional intermediate named Histidine-containing phosphotransfer protein (HPt). This multistep phosphorelay consists of a His-Asp-His-Asp sequential transfer of a phosphate group between first a His and an Asp of the HK protein, followed by the transfer to a conserved His of the HPt protein and finally the transfer to an Asp in the receiver domain of the RR protein.

It is found in the nucleus. Its function is as follows. Transcriptional activator that binds specific DNA sequence. Functions as a response regulator involved in His-to-Asp phosphorelay signal transduction system. Phosphorylation of the Asp residue in the receiver domain activates the ability of the protein to promote the transcription of target genes. May directly activate some type-A response regulators in response to cytokinins. The sequence is that of Two-component response regulator ORR28 from Oryza sativa subsp. indica (Rice).